An 86-amino-acid polypeptide reads, in one-letter code: Co-chaperonin GroES (86 aa).

This sequence belongs to the GroES chaperonin family. In terms of assembly, heptamer of 7 subunits arranged in a ring. Interacts with the chaperonin GroEL.

Its subcellular location is the cytoplasm. Its function is as follows. Together with the chaperonin GroEL, plays an essential role in assisting protein folding. The GroEL-GroES system forms a nano-cage that allows encapsulation of the non-native substrate proteins and provides a physical environment optimized to promote and accelerate protein folding. GroES binds to the apical surface of the GroEL ring, thereby capping the opening of the GroEL channel. The sequence is that of Co-chaperonin GroES from Campylobacter jejuni subsp. jejuni serotype O:6 (strain 81116 / NCTC 11828).